The sequence spans 196 residues: Large ribosomal subunit protein eL15 (196 aa).

The tract at residues 153 to 196 (DPSSRGRATRGKTSAGRKGRGMATRGKGTEKTRPSIRAYKSRGK) is disordered. Residues 159–172 (RATRGKTSAGRKGR) are compositionally biased toward basic residues.

Belongs to the eukaryotic ribosomal protein eL15 family.

The sequence is that of Large ribosomal subunit protein eL15 from Methanosarcina acetivorans (strain ATCC 35395 / DSM 2834 / JCM 12185 / C2A).